Consider the following 100-residue polypeptide: Small ribosomal subunit protein uS14c (100 aa).

This sequence belongs to the universal ribosomal protein uS14 family. In terms of assembly, part of the 30S ribosomal subunit.

The protein resides in the plastid. The protein localises to the chloroplast. In terms of biological role, binds 16S rRNA, required for the assembly of 30S particles. The sequence is that of Small ribosomal subunit protein uS14c from Illicium oligandrum (Star anise).